The primary structure comprises 173 residues: Large ribosomal subunit protein uL10 (173 aa).

It belongs to the universal ribosomal protein uL10 family. Part of the ribosomal stalk of the 50S ribosomal subunit. The N-terminus interacts with L11 and the large rRNA to form the base of the stalk. The C-terminus forms an elongated spine to which L12 dimers bind in a sequential fashion forming a multimeric L10(L12)X complex.

Forms part of the ribosomal stalk, playing a central role in the interaction of the ribosome with GTP-bound translation factors. This is Large ribosomal subunit protein uL10 from Thermus thermophilus (strain ATCC BAA-163 / DSM 7039 / HB27).